Consider the following 306-residue polypeptide: D-alanine--D-alanine ligase (306 aa).

Residues 104–303 (KMLWKAFGLP…FEQLVVKILE (200 aa)) form the ATP-grasp domain. 134-189 (VAKLGLPLMVKPSLEGSSVGLTKVKAVEELKSAVEYALKFDNTILIEEWLAGDELT) contacts ATP. Positions 257, 270, and 272 each coordinate Mg(2+).

It belongs to the D-alanine--D-alanine ligase family. It depends on Mg(2+) as a cofactor. Mn(2+) is required as a cofactor.

It is found in the cytoplasm. The catalysed reaction is 2 D-alanine + ATP = D-alanyl-D-alanine + ADP + phosphate + H(+). The protein operates within cell wall biogenesis; peptidoglycan biosynthesis. Its function is as follows. Cell wall formation. The polypeptide is D-alanine--D-alanine ligase (Haemophilus influenzae (strain PittGG)).